Reading from the N-terminus, the 199-residue chain is MAEFDKEAYAERERSAASRKTLLKKQELVNSYKERLQKSNGFVIFFNFQGIDAYPLTLLRLDIKDLKGEIVVGKNTLFYRAFSDTVLSDHRDIFVGPTAALFAYEDPVAVTKKLVEFLKETFDKEWEGRIKGGLLDYKYITPEQVKELAELPSKEELIAKLLGVLMAPVTQLAMTLKAVPQKLVLVLKAIEEEKSKGGQ.

This sequence belongs to the universal ribosomal protein uL10 family. Part of the ribosomal stalk of the 50S ribosomal subunit. The N-terminus interacts with L11 and the large rRNA to form the base of the stalk. The C-terminus forms an elongated spine to which L12 dimers bind in a sequential fashion forming a multimeric L10(L12)X complex.

Functionally, forms part of the ribosomal stalk, playing a central role in the interaction of the ribosome with GTP-bound translation factors. The chain is Large ribosomal subunit protein uL10 (rplJ) from Aquifex aeolicus (strain VF5).